The chain runs to 422 residues: UDP-N-acetylglucosamine 1-carboxyvinyltransferase (422 aa).

Residue 22-23 participates in phosphoenolpyruvate binding; it reads KN. Position 93 (Arg93) interacts with UDP-N-acetyl-alpha-D-glucosamine. Cys117 (proton donor) is an active-site residue. Residue Cys117 is modified to 2-(S-cysteinyl)pyruvic acid O-phosphothioketal. UDP-N-acetyl-alpha-D-glucosamine contacts are provided by residues 122–126, Asp308, and Leu330; that span reads RPVDL.

Belongs to the EPSP synthase family. MurA subfamily.

The protein resides in the cytoplasm. It carries out the reaction phosphoenolpyruvate + UDP-N-acetyl-alpha-D-glucosamine = UDP-N-acetyl-3-O-(1-carboxyvinyl)-alpha-D-glucosamine + phosphate. The protein operates within cell wall biogenesis; peptidoglycan biosynthesis. Functionally, cell wall formation. Adds enolpyruvyl to UDP-N-acetylglucosamine. In Helicobacter pylori (strain ATCC 700392 / 26695) (Campylobacter pylori), this protein is UDP-N-acetylglucosamine 1-carboxyvinyltransferase.